Reading from the N-terminus, the 1080-residue chain is MLRTVSCLASRSSSSLFFRFFRQFPRSYMSLTSSTAALRVPSRNLRRISSPSVAGRRLLLRRGLRIPSAAVRSVNGQFSRLSVRAVATQPAPLYPDVGQDEAEKLGFEKVSEEFISECKSKAILFKHKKTGCEVMSVSNEDENKVFGVVFRTPPKDSTGIPHILEHSVLCGSRKYPVKEPFVELLKGSLHTFLNAFTYPDRTCYPVASTNTKDFYNLVDVYLDAVFFPKCVDDAHTFQQEGWHYELNDPSEDISYKGVVFNEMKGVYSQPDNILGRIAQQALSPENTYGVDSGGDPKDIPNLTFEEFKEFHRQYYHPSNARIWFYGDDDPVHRLRVLSEYLDMFEASPSPNSSKIKFQKLFSEPVRLVEKYPAGRDGDLKKKHMLCVNWLLSEKPLDLQTQLALGFLDHLMLGTPASPLRKILLESGLGEALVSSGLSDELLQPQFGIGLKGVSEENVQKVEELIMDTLKKLAEEGFDNDAVEASMNTIEFSLRENNTGSFPRGLSLMLQSISKWIYDMDPFEPLKYTEPLKALKTRIAEEGSKAVFSPLIEKLILNNSHRVTIEMQPDPEKATQEEVEEKNILEKVKAAMTEEDLAELARATEELKLKQETPDPPEALRCVPSLNLGDIPKEPTYVPTEVGDINGVKVLRHDLFTNDIIYTEVVFDIGSLKHELLPLVPLFCQSLLEMGTKDLTFVQLNQLIGRKTGGISVYPLTSSVRGKDEPCSKIIVRGKSMAGRADDLFNLMNCLLQEVQFTDQQRFKQFVSQSRARMENRLRGSGHGIAAARMDAMLNIAGWMSEQMGGLSYLEFLHTLEKKVDEDWEGISSSLEEIRRSLLARNGCIVNMTADGKSLTNVEKSVAKFLDLLPENPSGGLVTWDGRLPLRNEAIVIPTQVNYVGKAGNIYSTGYELDGSAYVISKHISNTWLWDRVRVSGGAYGGFCDFDSHSGVFSYLSYRDPNLLKTLDIYDGTGDFLRGLDVDQETLTKAIIGTIGDVDSYQLPDAKGYSSLLRHLLGVTDEERQRKREEILTTSLKDFKDFAQAIDVVRDKGVAVAVASAEDIDAANNERSNFFEVKKAL.

A chloroplast and mitochondrion-targeting transit peptide spans 1–85 (MLRTVSCLAS…GQFSRLSVRA (85 aa)). Val-86 carries the post-translational modification N-acetylvaline. His-162 lines the Zn(2+) pocket. The Proton acceptor role is filled by Glu-165. His-166 is a Zn(2+) binding site. Residue Glu-240 is part of the active site. Residue Glu-262 coordinates Zn(2+). Residues 571–612 (EKATQEEVEEKNILEKVKAAMTEEDLAELARATEELKLKQET) are a coiled coil. Arg-705 lines the Mg(2+) pocket.

It belongs to the peptidase M16 family. PreP subfamily. Homodimer. It depends on Zn(2+) as a cofactor. Requires Mg(2+) as cofactor. As to expression, expressed only in siliques and flowers.

Its subcellular location is the plastid. It is found in the chloroplast stroma. The protein localises to the mitochondrion matrix. Inactive in the absence of MgCl(2) and CaCl(2) and full activation at 10 mM concentrations of either ion. Completely inhibited by the metal chelator orthophenanthroline, but not affected by phenylmethylsulfonyl fluoride (PMSF) or N-ethylmaleimide (NEM). Functionally, ATP-independent protease that degrades both mitochondrial and chloroplastic transit peptides after their cleavage. Also degrades other unstructured peptides. Specific for peptides in the range of 10 to 65 residues. Shows a preference for cleavage after small polar residues and before basic residues, with a bias for positively charged amino acid residues. This chain is Presequence protease 1, chloroplastic/mitochondrial (PREP1), found in Arabidopsis thaliana (Mouse-ear cress).